A 128-amino-acid chain; its full sequence is Large ribosomal subunit protein bL17 (128 aa).

It belongs to the bacterial ribosomal protein bL17 family. As to quaternary structure, part of the 50S ribosomal subunit. Contacts protein L32.

The polypeptide is Large ribosomal subunit protein bL17 (Pseudomonas entomophila (strain L48)).